A 235-amino-acid chain; its full sequence is V-type proton ATPase subunit E2 (235 aa).

Methionine 1 carries the post-translational modification N-acetylmethionine. The stretch at lysine 8–isoleucine 64 forms a coiled coil.

Belongs to the V-ATPase E subunit family. In terms of assembly, V-ATPase is a heteromultimeric enzyme composed of a peripheral catalytic V1 complex (components A to H) attached to an integral membrane V0 proton pore complex (components: a, c, c'', d and e).

Its subcellular location is the vacuole membrane. In terms of biological role, subunit of the peripheral V1 complex of vacuolar ATPase essential for assembly or catalytic function. V-ATPase is responsible for acidifying a variety of intracellular compartments in eukaryotic cells. The chain is V-type proton ATPase subunit E2 (VHA-E2) from Arabidopsis thaliana (Mouse-ear cress).